The primary structure comprises 155 residues: Ubiquinone biosynthesis protein COQ4 homolog, mitochondrial (155 aa).

This sequence belongs to the COQ4 family. Component of a multi-subunit COQ enzyme complex. Zn(2+) serves as cofactor.

It is found in the mitochondrion inner membrane. The enzyme catalyses a 4-hydroxy-3-methoxy-5-(all-trans-polyprenyl)benzoate + H(+) = a 2-methoxy-6-(all-trans-polyprenyl)phenol + CO2. It functions in the pathway cofactor biosynthesis; ubiquinone biosynthesis. Lyase that catalyzes the C1-decarboxylation of 4-hydroxy-3-methoxy-5-(all-trans-polyprenyl)benzoic acid into 2-methoxy-6-(all-trans-polyprenyl)phenol during ubiquinone biosynthesis. This chain is Ubiquinone biosynthesis protein COQ4 homolog, mitochondrial, found in Cryptosporidium hominis.